Here is a 166-residue protein sequence, read N- to C-terminus: Phosphopantetheine adenylyltransferase (166 aa).

Thr10 is a binding site for substrate. ATP is bound by residues 10–11 (TF) and His18. Substrate contacts are provided by Lys42, Leu74, and Arg88. ATP is bound by residues 89-91 (GLR), Glu99, and 124-130 (NSFISSS).

The protein belongs to the bacterial CoaD family. Homohexamer. The cofactor is Mg(2+).

It localises to the cytoplasm. The catalysed reaction is (R)-4'-phosphopantetheine + ATP + H(+) = 3'-dephospho-CoA + diphosphate. It functions in the pathway cofactor biosynthesis; coenzyme A biosynthesis; CoA from (R)-pantothenate: step 4/5. In terms of biological role, reversibly transfers an adenylyl group from ATP to 4'-phosphopantetheine, yielding dephospho-CoA (dPCoA) and pyrophosphate. The protein is Phosphopantetheine adenylyltransferase of Idiomarina loihiensis (strain ATCC BAA-735 / DSM 15497 / L2-TR).